The sequence spans 286 residues: MPLVSMKEMLIDAKENGYAVGQYNLNNLEFTQAILEASQEENAPVILGVSEGAARYMSGFYTVVKMVEGLMHDLNITIPVAIHLDHGSSFEKCKEAIDAGFTSVMIDASHSPFEENVEITSKVVEYAHDRGVSVEAELGTVGGQEDDVVADGVIYADPKECQELVEKTGIDTLAPALGSVHGPYKGEPKLGFKEMEEIGASTGLPLVLHGGTGIPTKDIQKAIPYGTAKINVNTENQIASAKAVREVLNNDKDVYDPRKYLGPAREAIKETVKGKIREFGTSNRAK.

D-glyceraldehyde 3-phosphate is bound at residue Ser-50. The active-site Proton donor is Asp-85. 4 residues coordinate Zn(2+): His-86, Asp-107, Glu-137, and His-181. Gly-182 provides a ligand contact to dihydroxyacetone phosphate. His-209 contacts Zn(2+). Dihydroxyacetone phosphate is bound by residues 210 to 212 (GGT) and 231 to 234 (NVNT).

This sequence belongs to the class II fructose-bisphosphate aldolase family. It depends on Zn(2+) as a cofactor.

It catalyses the reaction beta-D-fructose 1,6-bisphosphate = D-glyceraldehyde 3-phosphate + dihydroxyacetone phosphate. Its pathway is carbohydrate degradation; glycolysis; D-glyceraldehyde 3-phosphate and glycerone phosphate from D-glucose: step 4/4. In terms of biological role, catalyzes the aldol condensation of dihydroxyacetone phosphate (DHAP or glycerone-phosphate) with glyceraldehyde 3-phosphate (G3P) to form fructose 1,6-bisphosphate (FBP) in gluconeogenesis and the reverse reaction in glycolysis. In Staphylococcus epidermidis (strain ATCC 35984 / DSM 28319 / BCRC 17069 / CCUG 31568 / BM 3577 / RP62A), this protein is Fructose-bisphosphate aldolase (fba).